Consider the following 426-residue polypeptide: Potassium channel subfamily K member 2 (426 aa).

The Cytoplasmic portion of the chain corresponds to 1-61 (MLPSASRERP…TTINVMKWKT (61 aa)). 2 important for GNG4 binding and L-glutamate release in astrocytes regions span residues 17 to 38 (AAPD…LSFS) and 51 to 61 (DTTINVMKWKT). A helical transmembrane segment spans residues 62–82 (VSTIFLVVVLYLIIGATVFKA). 2 N-linked (GlcNAc...) asparagine glycosylation sites follow: N110 and N134. Positions 144–170 (LGSSFFFAGTVITTIGFGNISPRTEGG) form an intramembrane region, pore-forming. 4 residues coordinate K(+): T157, I158, G159, and F160. Residues 157–162 (TIGFGN) are selectivity filter 1. Residues 172-192 (IFCIIYALLGIPLFGFLLAGV) traverse the membrane as a helical segment. Over 193–223 (GDQLGTIFGKGIAKVEDTFIKWNVSQTKIRI) the chain is Cytoplasmic. Residues 224–244 (ISTIIFILFGCVLFVALPAII) traverse the membrane as a helical segment. The segment at residues 253 to 283 (ALDAIYFVVITLTTIGFGDYVAGGSDIEYLD) is an intramembrane region (pore-forming). The K(+) site is built by T266, I267, G268, and F269. A selectivity filter 2 region spans residues 266-271 (TIGFGD). Residues 288–308 (VVWFWILVGLAYFAAVLSMIG) traverse the membrane as a helical segment. Residues 309 to 426 (DWLRVISKKT…EEIAVIENIK (118 aa)) are Cytoplasmic-facing. Positions 313-326 (VISKKTKEEVGEFR) are interaction with AKAP5. Positions 337–385 (TAEFKETRRRLSVEIYDKFQRATSIKRKLSAELAGNHNQELTPCRRTLS) are essential for chloroform and halothane sensitivity. A Phosphoserine; by PKA modification is found at S348.

It belongs to the two pore domain potassium channel (TC 1.A.1.8) family. Homodimer; disulfide-linked. Forms heterodimers with other 2-pore domain K(+) channel subunits, such as KCNK1, KCNK4, KCNK10 and KCNK18. Interacts with AKAP5; the channel is recruited to postsynaptic microdomains by AKAP5 where it can integrate neurotransmitter receptor signals. Part of a complex composed of AKAP5 and ADRB2. Upon AKAP5 binding, the channel is no longer sensitive to intracellular acidification, membrane stretch or arachidonic acid stimuli. Interacts with POPDC1; the interaction enhances KCNK2 surface expression and is inhibited by cAMP. Interacts (via N-terminus) with G-protein subunit GNG4 (via C-terminus); this interaction confers ion selectivity to L-glutamate and Cl(-) anions. In terms of processing, phosphorylation at Ser-348 controls the reversible conversion from a leak channel to a voltage-dependent channel. As to expression, detected in kidney, adrenal gland and brain where it is preferentially expressed in the amygdala but not found in thalamus, hypothalamus, hippocampus or substantia nigra.

It is found in the cell membrane. The protein resides in the endoplasmic reticulum membrane. It localises to the cell projection. Its subcellular location is the axon. The protein localises to the dendrite. It is found in the postsynaptic density membrane. The protein resides in the sarcolemma. The enzyme catalyses K(+)(in) = K(+)(out). It carries out the reaction L-glutamate(out) = L-glutamate(in). The catalysed reaction is chloride(in) = chloride(out). It catalyses the reaction Rb(+)(in) = Rb(+)(out). The enzyme catalyses Cs(+)(in) = Cs(+)(out). With respect to regulation, activated by various stimuli including intracellular acidic pH, mechanical stretch and polyunsaturated fatty acids such as arachidonic acid. Activated by volatile anesthetics such as chloroform, halothane, and isoflurane. Functionally, k(+) channel that conducts voltage-dependent outward rectifying currents upon membrane depolarization. Voltage sensing is coupled to K(+) electrochemical gradient in an 'ion flux gating' mode where outward but not inward ion flow opens the gate. Converts to voltage-independent 'leak' conductance mode upon stimulation by various stimuli including mechanical membrane stretch, acidic pH, heat and lipids. Reversibly converts between a voltage-insensitive K(+) 'leak' channel and a voltage-dependent outward rectifying K(+) channel in a phosphorylation-dependent manner. Homo- and heterodimerizes to form functional channels with distinct regulatory and gating properties. In trigeminal ganglia sensory neurons, the heterodimer of KCNK2/TREK-1 and KCNK18/TRESK inhibits neuronal firing and neurogenic inflammation by stabilizing the resting membrane potential at K(+) equilibrium potential as well as by regulating the threshold of action potentials and the spike frequency. At trigeminal A-beta afferent nerves, the heterodimer of KCNK2/TREK-1 and KCNK4/TRAAK is mostly coexpressed at nodes of Ranvier where it conducts voltage-independent mechanosensitive and thermosensitive currents, allowing rapid action potential repolarization, high speed and high frequence saltatory conduction on myelinated nerves to ensure prompt sensory responses. In hippocampal astrocytes, the heterodimer of KCNK2/TREK-1 and KCNK1/TWIK-1 allows passive K(+) conductance under basal conditions, but changes ion selectivity and becomes permeable to L-glutamate and Cl(-) ions upon binding to G-protein subunit GNG4 in stimulated astrocytes. Mediates rapid L-glutamate release in response to activation of G-protein-coupled receptors, such as F2R and CNR1. In hippocampal pyramidal neurons, the homodimer of KCNK2/TREK-1 contributes to gamma-aminobutyric acid (GABA) B-induced slow inhibitory postsynaptic potential. Associates with AKAP5 and Gs-protein-coupled receptor B2AR at postsynaptic dense bodies and converts to a leak channel no longer sensitive to stimulation by arachidonic acid, acidic pH or mechanical stress, nor inhibited by Gq-coupled receptors but still under the negative control of Gs-coupled receptors. Permeable to other monovalent cations such as Rb(+) and Cs(+). In terms of biological role, does not display channel activity but reduces the channel activity of isoform 1 and isoform 2 and reduces cell surface expression of isoform 2. The chain is Potassium channel subfamily K member 2 from Homo sapiens (Human).